Reading from the N-terminus, the 425-residue chain is Serine--tRNA ligase (425 aa).

L-serine is bound at residue 232–234 (TSE). ATP is bound by residues 263–265 (RRE) and Val-279. Glu-286 contributes to the L-serine binding site. 350–353 (EVVS) provides a ligand contact to ATP. Position 387 (Thr-387) interacts with L-serine.

It belongs to the class-II aminoacyl-tRNA synthetase family. Type-1 seryl-tRNA synthetase subfamily. As to quaternary structure, homodimer. The tRNA molecule binds across the dimer.

Its subcellular location is the cytoplasm. It catalyses the reaction tRNA(Ser) + L-serine + ATP = L-seryl-tRNA(Ser) + AMP + diphosphate + H(+). The catalysed reaction is tRNA(Sec) + L-serine + ATP = L-seryl-tRNA(Sec) + AMP + diphosphate + H(+). Its pathway is aminoacyl-tRNA biosynthesis; selenocysteinyl-tRNA(Sec) biosynthesis; L-seryl-tRNA(Sec) from L-serine and tRNA(Sec): step 1/1. Its function is as follows. Catalyzes the attachment of serine to tRNA(Ser). Is also able to aminoacylate tRNA(Sec) with serine, to form the misacylated tRNA L-seryl-tRNA(Sec), which will be further converted into selenocysteinyl-tRNA(Sec). The polypeptide is Serine--tRNA ligase (Methanospirillum hungatei JF-1 (strain ATCC 27890 / DSM 864 / NBRC 100397 / JF-1)).